Consider the following 261-residue polypeptide: Small ribosomal subunit protein uS2 (261 aa).

Residues 222–261 are disordered; it reads GKALREQDGEANEEQPISEEEKKEVLEEAMSEEDFEGDKE. 2 stretches are compositionally biased toward acidic residues: residues 230–239 and 248–261; these read GEANEEQPIS and EEAMSEEDFEGDKE.

This sequence belongs to the universal ribosomal protein uS2 family.

The chain is Small ribosomal subunit protein uS2 from Campylobacter lari (strain RM2100 / D67 / ATCC BAA-1060).